Consider the following 138-residue polypeptide: Large ribosomal subunit protein uL16 (138 aa).

This sequence belongs to the universal ribosomal protein uL16 family. In terms of assembly, part of the 50S ribosomal subunit.

Functionally, binds 23S rRNA and is also seen to make contacts with the A and possibly P site tRNAs. The sequence is that of Large ribosomal subunit protein uL16 from Anaeromyxobacter dehalogenans (strain 2CP-C).